Here is a 1146-residue protein sequence, read N- to C-terminus: Killer toxin subunits alpha/beta (1146 aa).

The first 17 residues, 1–17 (MNIFYIFLFLLSFVQGL), serve as a signal peptide directing secretion. The propeptide occupies 18-29 (EHTHRRGSLVKR). 2 LysM domains span residues 205–234 (ADQSGINGESLQGYNPNLDFSKLSAGQPIC) and 254–303 (KTYK…NLCV). In terms of domain architecture, Chitin-binding type-1 spans 316–372 (IAECGPLAPGEKYNAKCPLNACCSEFGFCGLTKDYCDKKSSTTGAPGTDGCFSNCGY). Cystine bridges form between C319-C338, C332-C344, C337-C351, and C366-C370. In terms of domain architecture, GH18 spans 383–735 (FKKIAYWLDA…DDTEDPFDEE (353 aa)). Residues I424 and 447 to 450 (GGWD) each bind chitin. Catalysis depends on E495, which acts as the Proton donor. Chitin-binding positions include Y496, 562–565 (MTYD), and W707. Residues N771, N858, N868, N876, and N1117 are each glycosylated (N-linked (GlcNAc...) asparagine).

Belongs to the glycosyl hydrolase 18 family. In terms of assembly, the killer toxin is composed of three subunits: alpha, beta and gamma. RF2 is potentially split by membrane-bound basic amino acid-specific peptidase to yield the alpha and beta subunits.

The enzyme catalyses Random endo-hydrolysis of N-acetyl-beta-D-glucosaminide (1-&gt;4)-beta-linkages in chitin and chitodextrins.. The alpha subunit is a potent exochitinase. Along with the beta subunit it plays a role in the initial interaction of the toxin with sensitive cells and allow the gamma subunit (the active toxin) to gain entry into the cell. The protein is Killer toxin subunits alpha/beta of Kluyveromyces lactis (strain ATCC 8585 / CBS 2359 / DSM 70799 / NBRC 1267 / NRRL Y-1140 / WM37) (Yeast).